The sequence spans 306 residues: Large ribosomal subunit protein mL45 (306 aa).

The protein belongs to the mitochondrion-specific ribosomal protein mL45 family. Component of the mitochondrial ribosome large subunit (39S) which comprises a 16S rRNA and about 50 distinct proteins.

The protein localises to the mitochondrion. Functionally, component of the mitochondrial large ribosomal subunit (mt-LSU). Within the mitochondrial ribosomes, required to direct the nascent polypeptide toward the tunnel exit and position the exit at a distance from the membrane surface. The polypeptide is Large ribosomal subunit protein mL45 (MRPL45) (Bos taurus (Bovine)).